The primary structure comprises 136 residues: Histone H2B (136 aa).

Residues M1–P10 are compositionally biased toward basic and acidic residues. The segment at M1–R44 is disordered. Residues K8 and K9 each carry the N6-acetyllysine; alternate modification. Residues K8 and K9 each participate in a glycyl lysine isopeptide (Lys-Gly) (interchain with G-Cter in SUMO); alternate cross-link. The residue at position 13 (K13) is an N6-acetyllysine. An N6-acetyllysine; alternate modification is found at K23. A Glycyl lysine isopeptide (Lys-Gly) (interchain with G-Cter in SUMO); alternate cross-link involves residue K23. Residue K24 forms a Glycyl lysine isopeptide (Lys-Gly) (interchain with G-Cter in SUMO) linkage. K130 participates in a covalent cross-link: Glycyl lysine isopeptide (Lys-Gly) (interchain with G-Cter in ubiquitin).

The protein belongs to the histone H2B family. As to quaternary structure, the nucleosome is a histone octamer containing two molecules each of H2A, H2B, H3 and H4 assembled in one H3-H4 heterotetramer and two H2A-H2B heterodimers. The octamer wraps approximately 147 bp of DNA. Monoubiquitinated to form H2BK123ub1. H2BK123ub1 gives a specific tag for epigenetic transcriptional activation and is also prerequisite for H3K4me and H3K79me formation. H2BK123ub1 also modulates the formation of double-strand breaks during meiosis and is a prerequisite for DNA-damage checkpoint activation. Post-translationally, acetylated by GCN5 to form H2BK11ac and H2BK16ac. H2BK16ac can also be formed by ESA1. Acetylation of N-terminal lysines and particularly formation of H2BK11acK16ac has a positive effect on transcription. In terms of processing, sumoylation to form H2BK6su or H2BK7su, and probably also H2BK16su or H2BK17su, occurs preferentially near the telomeres and represses gene transcription.

The protein localises to the nucleus. The protein resides in the chromosome. Core component of nucleosome. Nucleosomes wrap and compact DNA into chromatin, limiting DNA accessibility to the cellular machineries which require DNA as a template. Histones thereby play a central role in transcription regulation, DNA repair, DNA replication and chromosomal stability. DNA accessibility is regulated via a complex set of post-translational modifications of histones, also called histone code, and nucleosome remodeling. The polypeptide is Histone H2B (hh2b) (Rosellinia necatrix (White root-rot fungus)).